A 154-amino-acid polypeptide reads, in one-letter code: MTDIIATEVAPEAAEALAPVARAPLGDRPIQTVGRRKEAIVRVRIVPGSGRITCNGRELEAYFPSKVHQQLIKDPLVTTEKAETFDVIANLRGGGTTGQAGALRLAIARALIASEPDDRPALKKAGFLTRDARVKESKKYGLKKARKAPQYSKR.

A disordered region spans residues 135-154; sequence KESKKYGLKKARKAPQYSKR. The span at 140-154 shows a compositional bias: basic residues; the sequence is YGLKKARKAPQYSKR.

This sequence belongs to the universal ribosomal protein uS9 family.

In Salinispora arenicola (strain CNS-205), this protein is Small ribosomal subunit protein uS9.